A 198-amino-acid polypeptide reads, in one-letter code: DnaJ homolog subfamily C member 12 (198 aa).

Residue M1 is modified to N-acetylmethionine. The 66-residue stretch at 14 to 79 (DYYTLLGCDE…ESRARYDHWR (66 aa)) folds into the J domain. Positions 114 to 156 (EESDKTHTTKMENEECNEQRERKKEELASTAEKTEQKEPKPLE) are enriched in basic and acidic residues. The interval 114 to 169 (EESDKTHTTKMENEECNEQRERKKEELASTAEKTEQKEPKPLEKSVSPQNSDSSGF) is disordered. Phosphoserine occurs at positions 160, 166, and 182.

In terms of assembly, interacts with HSPA8. Interacts with TPH1. Interacts with TPH2. In terms of tissue distribution, expressed at high levels in brain, heart, and testis, and at reduced levels in kidney and stomach.

The protein resides in the cytoplasm. In terms of biological role, probable co-chaperone that participates in the proper folding of biopterin-dependent aromatic amino acid hydroxylases, which include phenylalanine-4-hydroxylase (PAH), tyrosine 3-monooxygenase (TH) and peripheral and neuronal tryptophan hydroxylases (TPH1 and TPH2). In Homo sapiens (Human), this protein is DnaJ homolog subfamily C member 12 (DNAJC12).